Here is a 312-residue protein sequence, read N- to C-terminus: Ribosomal RNA small subunit methyltransferase H (312 aa).

S-adenosyl-L-methionine contacts are provided by residues 34-36, Asp-54, Phe-81, Asp-102, and Gln-109; that span reads AGH.

Belongs to the methyltransferase superfamily. RsmH family.

The protein resides in the cytoplasm. It catalyses the reaction cytidine(1402) in 16S rRNA + S-adenosyl-L-methionine = N(4)-methylcytidine(1402) in 16S rRNA + S-adenosyl-L-homocysteine + H(+). Functionally, specifically methylates the N4 position of cytidine in position 1402 (C1402) of 16S rRNA. The chain is Ribosomal RNA small subunit methyltransferase H from Geotalea daltonii (strain DSM 22248 / JCM 15807 / FRC-32) (Geobacter daltonii).